Here is a 234-residue protein sequence, read N- to C-terminus: LexA repressor (234 aa).

Positions 26–46 form a DNA-binding region, H-T-H motif; the sequence is FDEMKTALELTSKSGIHRLIT. Active-site for autocatalytic cleavage activity residues include S155 and K193.

It belongs to the peptidase S24 family. Homodimer.

It catalyses the reaction Hydrolysis of Ala-|-Gly bond in repressor LexA.. Represses a number of genes involved in the response to DNA damage (SOS response), including recA and lexA. In the presence of single-stranded DNA, RecA interacts with LexA causing an autocatalytic cleavage which disrupts the DNA-binding part of LexA, leading to derepression of the SOS regulon and eventually DNA repair. This Bartonella henselae (strain ATCC 49882 / DSM 28221 / CCUG 30454 / Houston 1) (Rochalimaea henselae) protein is LexA repressor.